The sequence spans 214 residues: Orotate phosphoribosyltransferase (214 aa).

Residue lysine 26 coordinates 5-phospho-alpha-D-ribose 1-diphosphate. Phenylalanine 34 to phenylalanine 35 serves as a coordination point for orotate. 5-phospho-alpha-D-ribose 1-diphosphate is bound by residues tyrosine 72–lysine 73, arginine 99, lysine 100, lysine 103, histidine 105, and aspartate 124–alanine 132. 2 residues coordinate orotate: threonine 128 and arginine 156.

The protein belongs to the purine/pyrimidine phosphoribosyltransferase family. PyrE subfamily. In terms of assembly, homodimer. The cofactor is Mg(2+).

It catalyses the reaction orotidine 5'-phosphate + diphosphate = orotate + 5-phospho-alpha-D-ribose 1-diphosphate. The protein operates within pyrimidine metabolism; UMP biosynthesis via de novo pathway; UMP from orotate: step 1/2. In terms of biological role, catalyzes the transfer of a ribosyl phosphate group from 5-phosphoribose 1-diphosphate to orotate, leading to the formation of orotidine monophosphate (OMP). The polypeptide is Orotate phosphoribosyltransferase (Proteus mirabilis (strain HI4320)).